The chain runs to 219 residues: uncharacterized protein (219 aa).

This is an uncharacterized protein from Methanocaldococcus jannaschii (strain ATCC 43067 / DSM 2661 / JAL-1 / JCM 10045 / NBRC 100440) (Methanococcus jannaschii).